The primary structure comprises 194 residues: Peptidyl-tRNA hydrolase (194 aa).

Tyrosine 17 lines the tRNA pocket. Residue histidine 22 is the Proton acceptor of the active site. Positions 68, 70, and 116 each coordinate tRNA.

It belongs to the PTH family. As to quaternary structure, monomer.

It is found in the cytoplasm. The enzyme catalyses an N-acyl-L-alpha-aminoacyl-tRNA + H2O = an N-acyl-L-amino acid + a tRNA + H(+). Hydrolyzes ribosome-free peptidyl-tRNAs (with 1 or more amino acids incorporated), which drop off the ribosome during protein synthesis, or as a result of ribosome stalling. Its function is as follows. Catalyzes the release of premature peptidyl moieties from peptidyl-tRNA molecules trapped in stalled 50S ribosomal subunits, and thus maintains levels of free tRNAs and 50S ribosomes. The polypeptide is Peptidyl-tRNA hydrolase (Azotobacter vinelandii (strain DJ / ATCC BAA-1303)).